Consider the following 325-residue polypeptide: tRNA(Ile)-lysidine synthase (325 aa).

35-40 is a binding site for ATP; it reads SGGQDS.

Belongs to the tRNA(Ile)-lysidine synthase family.

It localises to the cytoplasm. It catalyses the reaction cytidine(34) in tRNA(Ile2) + L-lysine + ATP = lysidine(34) in tRNA(Ile2) + AMP + diphosphate + H(+). Its function is as follows. Ligates lysine onto the cytidine present at position 34 of the AUA codon-specific tRNA(Ile) that contains the anticodon CAU, in an ATP-dependent manner. Cytidine is converted to lysidine, thus changing the amino acid specificity of the tRNA from methionine to isoleucine. The sequence is that of tRNA(Ile)-lysidine synthase from Gloeobacter violaceus (strain ATCC 29082 / PCC 7421).